Reading from the N-terminus, the 192-residue chain is ATP-dependent Clp protease proteolytic subunit 1 (192 aa).

Serine 92 functions as the Nucleophile in the catalytic mechanism. The active site involves histidine 117.

This sequence belongs to the peptidase S14 family. In terms of assembly, fourteen ClpP subunits assemble into 2 heptameric rings which stack back to back to give a disk-like structure with a central cavity, resembling the structure of eukaryotic proteasomes.

Its subcellular location is the cytoplasm. The enzyme catalyses Hydrolysis of proteins to small peptides in the presence of ATP and magnesium. alpha-casein is the usual test substrate. In the absence of ATP, only oligopeptides shorter than five residues are hydrolyzed (such as succinyl-Leu-Tyr-|-NHMec, and Leu-Tyr-Leu-|-Tyr-Trp, in which cleavage of the -Tyr-|-Leu- and -Tyr-|-Trp bonds also occurs).. In terms of biological role, cleaves peptides in various proteins in a process that requires ATP hydrolysis. Has a chymotrypsin-like activity. Plays a major role in the degradation of misfolded proteins. The protein is ATP-dependent Clp protease proteolytic subunit 1 of Chlamydia abortus (strain DSM 27085 / S26/3) (Chlamydophila abortus).